Here is a 212-residue protein sequence, read N- to C-terminus: MNSFSTSAFGPVAFSLGLLLVLPAAFPAPVPPGEDSKDVAAPHRQPLTSSERIDKQIRYILDGISALRKETCNKSNMCESSKEALAENNLNLPKMAEKDGCFQSGFNEETCLVKIITGLLEFEVYLEYLQNRFESSEEQARAVQMSTKVLIQFLQKKAKNLDAITTPDPTTNASLLTKLQAQNQWLQDMTTHLILRSFKEFLQSSLRALRQM.

The N-terminal stretch at 1 to 29 (MNSFSTSAFGPVAFSLGLLLVLPAAFPAP) is a signal peptide. C72 and C78 are disulfide-bonded. N73 carries N-linked (GlcNAc...) asparagine glycosylation. Position 81 is a phosphoserine; by FAM20C (S81). A disulfide bridge links C101 with C111.

Belongs to the IL-6 superfamily. Component of a hexamer of two molecules each of IL6, IL6R and IL6ST; first binds to IL6R to associate with the signaling subunit IL6ST. Interacts with IL6R (via the N-terminal ectodomain); this interaction may be affected by IL6R-binding with SORL1, hence decreasing IL6 cis signaling. Interacts with SORL1 (via the N-terminal ectodomain); this interaction leads to IL6 internalization and lysosomal degradation. May form a trimeric complex with the soluble SORL1 ectodomain and soluble IL6R receptor; this interaction might stabilize circulating IL6, hence promoting IL6 trans signaling. In terms of processing, N- and O-glycosylated. As to expression, produced by skeletal muscle.

It is found in the secreted. Cytokine with a wide variety of biological functions in immunity, tissue regeneration, and metabolism. Binds to IL6R, then the complex associates to the signaling subunit IL6ST/gp130 to trigger the intracellular IL6-signaling pathway. The interaction with the membrane-bound IL6R and IL6ST stimulates 'classic signaling', whereas the binding of IL6 and soluble IL6R to IL6ST stimulates 'trans-signaling'. Alternatively, 'cluster signaling' occurs when membrane-bound IL6:IL6R complexes on transmitter cells activate IL6ST receptors on neighboring receiver cells. Functionally, IL6 is a potent inducer of the acute phase response. Rapid production of IL6 contributes to host defense during infection and tissue injury, but excessive IL6 synthesis is involved in disease pathology. In the innate immune response, is synthesized by myeloid cells, such as macrophages and dendritic cells, upon recognition of pathogens through toll-like receptors (TLRs) at the site of infection or tissue injury. In the adaptive immune response, is required for the differentiation of B cells into immunoglobulin-secreting cells. Plays a major role in the differentiation of CD4(+) T cell subsets. Essential factor for the development of T follicular helper (Tfh) cells that are required for the induction of germinal-center formation. Required to drive naive CD4(+) T cells to the Th17 lineage. Also required for proliferation of myeloma cells and the survival of plasmablast cells. In terms of biological role, acts as an essential factor in bone homeostasis and on vessels directly or indirectly by induction of VEGF, resulting in increased angiogenesis activity and vascular permeability. Induces, through 'trans-signaling' and synergistically with IL1B and TNF, the production of VEGF. Involved in metabolic controls, is discharged into the bloodstream after muscle contraction increasing lipolysis and improving insulin resistance. 'Trans-signaling' in central nervous system also regulates energy and glucose homeostasis. Mediates, through GLP-1, crosstalk between insulin-sensitive tissues, intestinal L cells and pancreatic islets to adapt to changes in insulin demand. Also acts as a myokine. Plays a protective role during liver injury, being required for maintenance of tissue regeneration. Also has a pivotal role in iron metabolism by regulating HAMP/hepcidin expression upon inflammation or bacterial infection. Through activation of IL6ST-YAP-NOTCH pathway, induces inflammation-induced epithelial regeneration. This chain is Interleukin-6, found in Homo sapiens (Human).